The following is a 256-amino-acid chain: Floral homeotic protein APETALA 1-1 (256 aa).

Positions 1-61 constitute an MADS-box domain; the sequence is MGRGRVQLKR…GKLFEYSTDS (61 aa). The K-box domain occupies 88–178; the sequence is NTNWSMEYNR…SKQIKEREKV (91 aa).

As to quaternary structure, homodimer capable of binding to CArG-box sequences. In terms of tissue distribution, expressed in some of the meristems of arrest-stage broccoli heads.

It is found in the nucleus. Its function is as follows. Transcription factor that promotes early floral meristem identity in synergy with LEAFY. Displays a redundant function with CAULIFLOWER in the up-regulation of LEAFY. Required subsequently for the transition of an inflorescence meristem into a floral meristem, and for the normal development of sepals and petals in flowers. Regulates positively B class homeotic proteins. The polypeptide is Floral homeotic protein APETALA 1-1 (1AP1) (Brassica oleracea var. italica (Broccoli)).